The following is a 156-amino-acid chain: Phospholipase A2 A2-hormotoxin-Apt1a (156 aa).

An N-terminal signal peptide occupies residues 1–19; the sequence is MQLYTYFFTFSLVLILALA. Positions 20 to 35 are excised as a propeptide; that stretch reads DQENKSLDFTQEGGIA. 5 disulfide bridges follow: Cys-62–Cys-156, Cys-64–Cys-80, Cys-79–Cys-138, Cys-86–Cys-131, and Cys-115–Cys-129. Ca(2+) is bound by residues Gly-65 and Gly-67. The active site involves His-83. Ca(2+) is bound at residue Asp-84. Asp-132 is a catalytic residue.

Belongs to the phospholipase A2 family. The cofactor is Ca(2+).

It localises to the secreted. The protein resides in the nematocyst. The catalysed reaction is a 1,2-diacyl-sn-glycero-3-phosphocholine + H2O = a 1-acyl-sn-glycero-3-phosphocholine + a fatty acid + H(+). Its function is as follows. Sea anemone phospholipase A2 (PLA2) that may have a role both in defense and in digestion, since its expression and enzymatic activity were found both in the acontia (defensive organs) and tentacles. PLA2 catalyzes the calcium-dependent hydrolysis of the 2-acyl groups in 3-sn-phosphoglycerides. This is Phospholipase A2 A2-hormotoxin-Apt1a from Adamsia palliata (Cloak anemone).